The primary structure comprises 145 residues: D-aminoacyl-tRNA deacylase (145 aa).

Positions 137 to 138 match the Gly-cisPro motif, important for rejection of L-amino acids motif; sequence GP.

This sequence belongs to the DTD family. In terms of assembly, homodimer.

It localises to the cytoplasm. The catalysed reaction is glycyl-tRNA(Ala) + H2O = tRNA(Ala) + glycine + H(+). It carries out the reaction a D-aminoacyl-tRNA + H2O = a tRNA + a D-alpha-amino acid + H(+). In terms of biological role, an aminoacyl-tRNA editing enzyme that deacylates mischarged D-aminoacyl-tRNAs. Also deacylates mischarged glycyl-tRNA(Ala), protecting cells against glycine mischarging by AlaRS. Acts via tRNA-based rather than protein-based catalysis; rejects L-amino acids rather than detecting D-amino acids in the active site. By recycling D-aminoacyl-tRNA to D-amino acids and free tRNA molecules, this enzyme counteracts the toxicity associated with the formation of D-aminoacyl-tRNA entities in vivo and helps enforce protein L-homochirality. The chain is D-aminoacyl-tRNA deacylase from Pelobacter propionicus (strain DSM 2379 / NBRC 103807 / OttBd1).